The sequence spans 53 residues: uncharacterized protein (53 aa).

Residues 28–45 traverse the membrane as a helical segment; it reads AIVFSLAVFGIVEAYYYW.

The protein resides in the host membrane. This is an uncharacterized protein from Acidianus convivator (ABV).